A 328-amino-acid chain; its full sequence is Embigin (328 aa).

The first 33 residues, 1 to 33 (MRSHTGLRALVAPGCSLLLLYLLAATRPDRAVG), serve as a signal peptide directing secretion. The Extracellular segment spans residues 34–264 (DPADSAFTSL…VLSFMVPLKP (231 aa)). N-linked (GlcNAc...) asparagine glycosylation is found at Asn55, Asn62, Asn75, Asn100, Asn117, Asn189, Asn196, Asn214, and Asn219. 2 Ig-like domains span residues 67 to 160 (EQTR…RVPK) and 159 to 254 (PKVH…IKLV). 2 disulfide bridges follow: Cys88–Cys144 and Cys180–Cys238. Residues 265–285 (FLAIIAEVILLVAIILLCEVY) form a helical membrane-spanning segment. Over 286–328 (TQKKKNDPDDGKEFEQIEQLKSDDSNGIENNVPRYRKTDSGDQ) the chain is Cytoplasmic. Basic and acidic residues predominate over residues 289-309 (KKNDPDDGKEFEQIEQLKSDD). A disordered region spans residues 289–328 (KKNDPDDGKEFEQIEQLKSDDSNGIENNVPRYRKTDSGDQ). Position 310 is a phosphoserine (Ser310).

As to quaternary structure, interacts with SLC16A1, SLC16A6 and SLC16A7. In terms of processing, N-glycosylated. In terms of tissue distribution, detected in prostate, mammary gland and erythrocytes (at protein level). Detected in testis, brain, prostate, heart, kidney, liver, mammary gland and lung.

It is found in the cell membrane. Its subcellular location is the synapse. In terms of biological role, plays a role in the outgrowth of motoneurons and in the formation of neuromuscular junctions. Following muscle denervation, promotes nerve terminal sprouting and the formation of additional acetylcholine receptor clusters at synaptic sites without affecting terminal Schwann cell number or morphology. Delays the retraction of terminal sprouts following re-innervation of denervated endplates. Plays a role in targeting the monocarboxylate transporters SLC16A1, SLC16A6 and SLC16A7 to the cell membrane. This Rattus norvegicus (Rat) protein is Embigin (Emb).